Here is a 330-residue protein sequence, read N- to C-terminus: MNWLTPELIEILVAVLKAIVILLAVVVCGALLSFVERRLLGWWQDRYGPNRVGPFGMFQIAADMIKMFFKEDWTPPFADRFIFVLAPMIAFAAMLMAFAIIPITPTWGVADLNIGILFFFAMAGLSVYAVLFAGWSSNNKFALLGSLRASAQTISYEVFLALALMGVVAQVGSFNMRDIVDYQAQNLWFIIPQFFGFCTFFIAGVAVTHRHPFDQPEAEQELADGYHIEYAGMKWGMFFVGEYVGIVTISALLVTLFFGGWHGPFGLLPQIPFFWFALKTAFFIMIFILLRASIPRPRYDQVMAFSWKFCLPLTLINLLVTGALVLAAAQ.

Transmembrane regions (helical) follow at residues 11–31 (ILVA…CGAL), 81–101 (FIFV…FAII), 114–134 (IGIL…LFAG), 154–174 (ISYE…VGSF), 187–207 (LWFI…GVAV), 238–258 (FFVG…TLFF), 270–290 (QIPF…FILL), and 309–329 (FCLP…LAAA).

This sequence belongs to the complex I subunit 1 family. As to quaternary structure, NDH-1 is composed of 13 different subunits. Subunits NuoA, H, J, K, L, M, N constitute the membrane sector of the complex.

It localises to the cell inner membrane. The enzyme catalyses a quinone + NADH + 5 H(+)(in) = a quinol + NAD(+) + 4 H(+)(out). NDH-1 shuttles electrons from NADH, via FMN and iron-sulfur (Fe-S) centers, to quinones in the respiratory chain. The immediate electron acceptor for the enzyme in this species is believed to be ubiquinone. Couples the redox reaction to proton translocation (for every two electrons transferred, four hydrogen ions are translocated across the cytoplasmic membrane), and thus conserves the redox energy in a proton gradient. This subunit may bind ubiquinone. The sequence is that of NADH-quinone oxidoreductase subunit H from Ectopseudomonas mendocina (strain ymp) (Pseudomonas mendocina).